Reading from the N-terminus, the 874-residue chain is Alanine--tRNA ligase (874 aa).

Positions 562, 566, 664, and 668 each coordinate Zn(2+).

Belongs to the class-II aminoacyl-tRNA synthetase family. Requires Zn(2+) as cofactor.

The protein localises to the cytoplasm. It catalyses the reaction tRNA(Ala) + L-alanine + ATP = L-alanyl-tRNA(Ala) + AMP + diphosphate. In terms of biological role, catalyzes the attachment of alanine to tRNA(Ala) in a two-step reaction: alanine is first activated by ATP to form Ala-AMP and then transferred to the acceptor end of tRNA(Ala). Also edits incorrectly charged Ser-tRNA(Ala) and Gly-tRNA(Ala) via its editing domain. The chain is Alanine--tRNA ligase from Shewanella loihica (strain ATCC BAA-1088 / PV-4).